Reading from the N-terminus, the 295-residue chain is Putative xyloglucan endotransglucosylase/hydrolase protein 1 (295 aa).

The N-terminal stretch at methionine 1–alanine 24 is a signal peptide. Positions tyrosine 27–phenylalanine 225 constitute a GH16 domain. Glutamate 113 serves as the catalytic Nucleophile. The active-site Proton donor is the glutamate 117. Xyloglucan is bound by residues glutamate 117, glutamine 129–asparagine 131, and asparagine 139–glutamate 141. Residue asparagine 180 is glycosylated (N-linked (GlcNAc...) asparagine). Xyloglucan is bound by residues asparagine 204–tryptophan 205 and glycine 209. 2 N-linked (GlcNAc...) asparagine glycosylation sites follow: asparagine 215 and asparagine 229. 2 cysteine pairs are disulfide-bonded: cysteine 233-cysteine 242 and cysteine 278-cysteine 291. Arginine 283 provides a ligand contact to xyloglucan.

It belongs to the glycosyl hydrolase 16 family. XTH group 1 subfamily. In terms of processing, contains at least one intrachain disulfide bond essential for its enzymatic activity.

The protein localises to the secreted. Its subcellular location is the cell wall. It is found in the extracellular space. It localises to the apoplast. The enzyme catalyses breaks a beta-(1-&gt;4) bond in the backbone of a xyloglucan and transfers the xyloglucanyl segment on to O-4 of the non-reducing terminal glucose residue of an acceptor, which can be a xyloglucan or an oligosaccharide of xyloglucan.. May catalyze xyloglucan endohydrolysis (XEH) and/or endotransglycosylation (XET). Cleaves and religates xyloglucan polymers, an essential constituent of the primary cell wall, and thereby participates in cell wall construction of growing tissues. In Arabidopsis thaliana (Mouse-ear cress), this protein is Putative xyloglucan endotransglucosylase/hydrolase protein 1 (XTH1).